The following is a 380-amino-acid chain: Cytochrome b (380 aa).

A run of 4 helical transmembrane segments spans residues 34–54 (FGSL…FLAM), 78–99 (WLLR…YFHI), 114–134 (WNIG…GYVL), and 179–199 (FFTF…IHLL). H84 and H98 together coordinate heme b. H197 is a heme b binding site. H202 lines the a ubiquinone pocket. Helical transmembrane passes span 227–247 (FKDL…STFA), 289–309 (LGGV…PITH), 321–341 (TAKA…WIGG), and 348–368 (FISI…LIIP).

It belongs to the cytochrome b family. As to quaternary structure, the cytochrome bc1 complex contains 3 respiratory subunits (MT-CYB, CYC1 and UQCRFS1), 2 core proteins (UQCRC1 and UQCRC2) and probably 6 low-molecular weight proteins. Requires heme b as cofactor.

It is found in the mitochondrion inner membrane. Its function is as follows. Component of the ubiquinol-cytochrome c reductase complex (complex III or cytochrome b-c1 complex) that is part of the mitochondrial respiratory chain. The b-c1 complex mediates electron transfer from ubiquinol to cytochrome c. Contributes to the generation of a proton gradient across the mitochondrial membrane that is then used for ATP synthesis. This Glandirana rugosa (Japanese wrinkled frog) protein is Cytochrome b (mt-cyb).